Reading from the N-terminus, the 588-residue chain is UvrABC system protein C (588 aa).

The GIY-YIG domain maps to 12 to 89; it reads SKPGCYLYLN…IKKYRPKYNV (78 aa). The UVR domain maps to 194-229; the sequence is NEVKTLLTNQMHKAAENLQFEEAQRIKEQIISLDFT.

The protein belongs to the UvrC family. In terms of assembly, interacts with UvrB in an incision complex.

It localises to the cytoplasm. In terms of biological role, the UvrABC repair system catalyzes the recognition and processing of DNA lesions. UvrC both incises the 5' and 3' sides of the lesion. The N-terminal half is responsible for the 3' incision and the C-terminal half is responsible for the 5' incision. This Mesoplasma florum (strain ATCC 33453 / NBRC 100688 / NCTC 11704 / L1) (Acholeplasma florum) protein is UvrABC system protein C.